The following is a 92-amino-acid chain: YcgL domain-containing protein Sama_1929 (92 aa).

The region spanning 1–85 (MICAVYKSSR…PKDNLLTQHR (85 aa)) is the YcgL domain.

The sequence is that of YcgL domain-containing protein Sama_1929 from Shewanella amazonensis (strain ATCC BAA-1098 / SB2B).